Consider the following 710-residue polypeptide: Integrator complex subunit 10 (710 aa).

Serine 231, serine 381, and serine 382 each carry phosphoserine. Lysine 464 is covalently cross-linked (Glycyl lysine isopeptide (Lys-Gly) (interchain with G-Cter in SUMO2)).

It belongs to the Integrator subunit 10 family. As to quaternary structure, component of the Integrator complex, composed of core subunits INTS1, INTS2, INTS3, INTS4, INTS5, INTS6, INTS7, INTS8, INTS9/RC74, INTS10, INTS11/CPSF3L, INTS12, INTS13, INTS14 and INTS15. The core complex associates with protein phosphatase 2A subunits PPP2CA and PPP2R1A, to form the Integrator-PP2A (INTAC) complex. INTS10 is part of the tail subcomplex, composed of INTS10, INTS13, INTS14 and INTS15.

The protein localises to the nucleus. In terms of biological role, component of the integrator complex, a multiprotein complex that terminates RNA polymerase II (Pol II) transcription in the promoter-proximal region of genes. The integrator complex provides a quality checkpoint during transcription elongation by driving premature transcription termination of transcripts that are unfavorably configured for transcriptional elongation: the complex terminates transcription by (1) catalyzing dephosphorylation of the C-terminal domain (CTD) of Pol II subunit POLR2A/RPB1 and SUPT5H/SPT5, (2) degrading the exiting nascent RNA transcript via endonuclease activity and (3) promoting the release of Pol II from bound DNA. The integrator complex is also involved in terminating the synthesis of non-coding Pol II transcripts, such as enhancer RNAs (eRNAs), small nuclear RNAs (snRNAs), telomerase RNAs and long non-coding RNAs (lncRNAs). Within the integrator complex, INTS10 is part of the integrator tail module that acts as a platform for the recruitment of transcription factors at promoters. May be not involved in the recruitment of cytoplasmic dynein to the nuclear envelope, probably as component of the integrator complex. The sequence is that of Integrator complex subunit 10 (Ints10) from Mus musculus (Mouse).